A 418-amino-acid polypeptide reads, in one-letter code: Gamma-glutamyl phosphate reductase (418 aa).

A compositionally biased stretch (basic and acidic residues) spans 1-18; sequence MAIQDEMRQVAEGAREAS. Residues 1–22 form a disordered region; it reads MAIQDEMRQVAEGAREASRTLS.

The protein belongs to the gamma-glutamyl phosphate reductase family.

The protein resides in the cytoplasm. It carries out the reaction L-glutamate 5-semialdehyde + phosphate + NADP(+) = L-glutamyl 5-phosphate + NADPH + H(+). Its pathway is amino-acid biosynthesis; L-proline biosynthesis; L-glutamate 5-semialdehyde from L-glutamate: step 2/2. Its function is as follows. Catalyzes the NADPH-dependent reduction of L-glutamate 5-phosphate into L-glutamate 5-semialdehyde and phosphate. The product spontaneously undergoes cyclization to form 1-pyrroline-5-carboxylate. The sequence is that of Gamma-glutamyl phosphate reductase from Syntrophus aciditrophicus (strain SB).